Reading from the N-terminus, the 344-residue chain is L-threonine 3-dehydrogenase (344 aa).

Cys-42 is a binding site for Zn(2+). Residues Thr-44 and His-47 each act as charge relay system in the active site. Residues His-67, Glu-68, Cys-97, Cys-100, Cys-103, and Cys-111 each coordinate Zn(2+). Residues Ile-179, Asp-199, Arg-204, Leu-266 to Ile-268, and Ile-290 to Tyr-291 each bind NAD(+).

This sequence belongs to the zinc-containing alcohol dehydrogenase family. As to quaternary structure, homotetramer. Zn(2+) is required as a cofactor.

The protein localises to the cytoplasm. The enzyme catalyses L-threonine + NAD(+) = (2S)-2-amino-3-oxobutanoate + NADH + H(+). It participates in amino-acid degradation; L-threonine degradation via oxydo-reductase pathway; glycine from L-threonine: step 1/2. In terms of biological role, catalyzes the NAD(+)-dependent oxidation of L-threonine to 2-amino-3-ketobutyrate. The chain is L-threonine 3-dehydrogenase from Sinorhizobium medicae (strain WSM419) (Ensifer medicae).